The chain runs to 240 residues: UDP-2,3-diacylglucosamine hydrolase (240 aa).

D8, H10, D41, N79, and H114 together coordinate Mn(2+). A substrate-binding site is contributed by 79-80 (NR). Substrate contacts are provided by D122, S160, N164, K167, and H195. Mn(2+) is bound by residues H195 and H197.

Belongs to the LpxH family. Requires Mn(2+) as cofactor.

The protein localises to the cell inner membrane. The enzyme catalyses UDP-2-N,3-O-bis[(3R)-3-hydroxytetradecanoyl]-alpha-D-glucosamine + H2O = 2-N,3-O-bis[(3R)-3-hydroxytetradecanoyl]-alpha-D-glucosaminyl 1-phosphate + UMP + 2 H(+). It functions in the pathway glycolipid biosynthesis; lipid IV(A) biosynthesis; lipid IV(A) from (3R)-3-hydroxytetradecanoyl-[acyl-carrier-protein] and UDP-N-acetyl-alpha-D-glucosamine: step 4/6. Hydrolyzes the pyrophosphate bond of UDP-2,3-diacylglucosamine to yield 2,3-diacylglucosamine 1-phosphate (lipid X) and UMP by catalyzing the attack of water at the alpha-P atom. Involved in the biosynthesis of lipid A, a phosphorylated glycolipid that anchors the lipopolysaccharide to the outer membrane of the cell. The protein is UDP-2,3-diacylglucosamine hydrolase of Escherichia coli (strain UTI89 / UPEC).